The sequence spans 557 residues: Formate--tetrahydrofolate ligase (557 aa).

66-73 is an ATP binding site; it reads TPAGEGKS.

This sequence belongs to the formate--tetrahydrofolate ligase family.

It carries out the reaction (6S)-5,6,7,8-tetrahydrofolate + formate + ATP = (6R)-10-formyltetrahydrofolate + ADP + phosphate. The protein operates within one-carbon metabolism; tetrahydrofolate interconversion. The polypeptide is Formate--tetrahydrofolate ligase (Lactobacillus johnsonii (strain CNCM I-12250 / La1 / NCC 533)).